We begin with the raw amino-acid sequence, 230 residues long: Heptaprenylglyceryl phosphate synthase (230 aa).

Sn-glycerol 1-phosphate is bound at residue Lys-12. Residues Asp-14 and Thr-40 each contribute to the Mg(2+) site. Sn-glycerol 1-phosphate is bound by residues 159 to 164 (YIEYSG), Gly-189, and 209 to 210 (GD).

The protein belongs to the GGGP/HepGP synthase family. Group I subfamily. As to quaternary structure, homodimer. The cofactor is Mg(2+).

The catalysed reaction is sn-glycerol 1-phosphate + all-trans-heptaprenyl diphosphate = 3-heptaprenyl-sn-glycero-1-phosphate + diphosphate. Its pathway is membrane lipid metabolism; glycerophospholipid metabolism. Its function is as follows. Prenyltransferase that catalyzes in vivo the transfer of the heptaprenyl moiety of heptaprenyl pyrophosphate (HepPP; 35 carbon atoms) to the C3 hydroxyl of sn-glycerol-1-phosphate (G1P), producing heptaprenylglyceryl phosphate (HepGP). This reaction is an ether-bond-formation step in the biosynthesis of archaea-type G1P-based membrane lipids found in Bacillales. The polypeptide is Heptaprenylglyceryl phosphate synthase (Staphylococcus aureus (strain JH1)).